A 444-amino-acid polypeptide reads, in one-letter code: Na(+)/H(+) antiporter NhaA 2 (444 aa).

A run of 11 helical transmembrane segments spans residues 21–41 (FSGI…NSPF), 64–84 (FSIH…MVGL), 102–122 (AFPV…YYVL), 131–151 (GFGI…LLLG), 160–180 (VFLV…IAVF), 185–205 (EGLH…LTGI), 212–232 (HLGV…HSGI), 307–327 (ALQP…NAGV), 342–362 (LGVI…LTFL), 377–397 (WSHI…SMFV), and 413–433 (IAIL…LIIN).

It belongs to the NhaA Na(+)/H(+) (TC 2.A.33) antiporter family.

The protein localises to the cell inner membrane. The catalysed reaction is Na(+)(in) + 2 H(+)(out) = Na(+)(out) + 2 H(+)(in). In terms of biological role, na(+)/H(+) antiporter that extrudes sodium in exchange for external protons. This Helicobacter hepaticus (strain ATCC 51449 / 3B1) protein is Na(+)/H(+) antiporter NhaA 2.